Reading from the N-terminus, the 357-residue chain is UDP-N-acetylglucosamine--N-acetylmuramyl-(pentapeptide) pyrophosphoryl-undecaprenol N-acetylglucosamine transferase (357 aa).

Residues 12–14 (TGG), asparagine 124, arginine 163, serine 189, isoleucine 243, 262–267 (ALTVSE), and glutamine 288 each bind UDP-N-acetyl-alpha-D-glucosamine.

This sequence belongs to the glycosyltransferase 28 family. MurG subfamily.

The protein localises to the cell inner membrane. It catalyses the reaction di-trans,octa-cis-undecaprenyl diphospho-N-acetyl-alpha-D-muramoyl-L-alanyl-D-glutamyl-meso-2,6-diaminopimeloyl-D-alanyl-D-alanine + UDP-N-acetyl-alpha-D-glucosamine = di-trans,octa-cis-undecaprenyl diphospho-[N-acetyl-alpha-D-glucosaminyl-(1-&gt;4)]-N-acetyl-alpha-D-muramoyl-L-alanyl-D-glutamyl-meso-2,6-diaminopimeloyl-D-alanyl-D-alanine + UDP + H(+). Its pathway is cell wall biogenesis; peptidoglycan biosynthesis. In terms of biological role, cell wall formation. Catalyzes the transfer of a GlcNAc subunit on undecaprenyl-pyrophosphoryl-MurNAc-pentapeptide (lipid intermediate I) to form undecaprenyl-pyrophosphoryl-MurNAc-(pentapeptide)GlcNAc (lipid intermediate II). The chain is UDP-N-acetylglucosamine--N-acetylmuramyl-(pentapeptide) pyrophosphoryl-undecaprenol N-acetylglucosamine transferase from Pseudomonas aeruginosa (strain LESB58).